Consider the following 681-residue polypeptide: Chaperone protein htpG (681 aa).

Residues 1 to 326 (MQKGNIGVTT…SPDIPLNVSR (326 aa)) form an a; substrate-binding region. The interval 327–545 (SYLQSDSNVK…YMRRMKEMAN (219 aa)) is b. Positions 546-681 (IQAGMSFYGE…NFVKRSIELI (136 aa)) are c. A disordered region spans residues 601–620 (DALKKKQEGKKDEDIPTAEK).

The protein belongs to the heat shock protein 90 family. Homodimer.

Its subcellular location is the cytoplasm. Molecular chaperone. Has ATPase activity. The polypeptide is Chaperone protein htpG (Bacteroides fragilis (strain 638R)).